Consider the following 603-residue polypeptide: Pentatricopeptide repeat-containing protein At2g02980, chloroplastic (603 aa).

Residues Met-1–Lys-38 constitute a chloroplast transit peptide. PPR repeat units follow at residues Asp-93–Pro-127, Asp-128–Asp-162, Asn-163–Pro-193, Cys-194–Pro-228, Asn-229–Lys-263, Tyr-264–Lys-294, Asp-295–Pro-329, Asp-330–Pro-365, Ser-366–Met-400, and His-432–Lys-466. Positions Leu-401–Asn-476 are type E motif. The type E(+) motif stretch occupies residues Asn-477–Lys-507. The segment at Leu-508–Trp-603 is type DYW motif.

It belongs to the PPR family. PCMP-H subfamily.

It localises to the plastid. The protein resides in the chloroplast. Functionally, involved in RNA editing event in chloroplasts. Required for the editing of a single site in ndhD transcript, which is a plastid-encoded subunits of the chloroplast NAD(P)H dehydrogenase (NDH) complex. Not essential for the activity of the NDH complex of the photosynthetic electron transport chain. The sequence is that of Pentatricopeptide repeat-containing protein At2g02980, chloroplastic (PCMP-H26) from Arabidopsis thaliana (Mouse-ear cress).